A 490-amino-acid chain; its full sequence is UDP-N-acetylmuramate--L-alanine ligase (490 aa).

An ATP-binding site is contributed by 126–132; sequence GTHGKTT.

Belongs to the MurCDEF family.

It is found in the cytoplasm. The enzyme catalyses UDP-N-acetyl-alpha-D-muramate + L-alanine + ATP = UDP-N-acetyl-alpha-D-muramoyl-L-alanine + ADP + phosphate + H(+). It participates in cell wall biogenesis; peptidoglycan biosynthesis. Functionally, cell wall formation. The protein is UDP-N-acetylmuramate--L-alanine ligase of Sodalis glossinidius (strain morsitans).